The following is an 891-amino-acid chain: Longitudinals lacking protein, isoform G (891 aa).

The 66-residue stretch at 32 to 97 folds into the BTB domain; that stretch reads VDCTLAAEGK…MYRGEVNISQ (66 aa). 2 disordered regions span residues 115 to 200 and 228 to 340; these read LSDN…SSVL and SSGP…ASAS. At serine 140 the chain carries Phosphoserine. Threonine 161 carries the post-translational modification Phosphothreonine. 2 positions are modified to phosphoserine: serine 162 and serine 168. 4 stretches are compositionally biased toward low complexity: residues 162–175, 228–251, 263–293, and 329–340; these read SGDV…SSSP, SSGP…LTST, TSST…QTTS, and NSATGPNPASAS. Phosphoserine is present on residues serine 372, serine 375, and serine 378. Residues 446-467 are disordered; that stretch reads QDAQQRDPQDLSRKENTAPDVA. Positions 449-462 are enriched in basic and acidic residues; that stretch reads QQRDPQDLSRKENT. A phosphoserine mark is found at serine 696 and serine 705. Threonine 706 bears the Phosphothreonine mark. A phosphoserine mark is found at serine 749 and serine 750. A C2H2-type 1; degenerate zinc finger spans residues 791-813; it reads YECRHCGKKYRWKSTLRRHENVE. The C2H2-type 2 zinc finger occupies 821-843; that stretch reads HQCPYCPYKSKQRGNLGVHVRKH. Positions 840–891 are disordered; sequence VRKHHTDLPQLPSKRRSKYSMNRENGMSGSMSDDSQGKLIIDFNGKGELETK. Serine 874 is modified (phosphoserine).

As to expression, expressed in both mesoderm and ectoderm with expression highest in the mesectoderm by stage 11. Becomes enriched in a cluster of brain cells, in abdominal histoblasts, and in the embryonic imaginal disks during later stages.

It localises to the nucleus. Functionally, putative transcription factor required for axon growth and guidance in the central and peripheral nervous systems. Repels CNS axons away from the midline by promoting the expression of the midline repellent sli and its receptor robo. The polypeptide is Longitudinals lacking protein, isoform G (Drosophila melanogaster (Fruit fly)).